The chain runs to 195 residues: Peptidyl-tRNA hydrolase (195 aa).

A tRNA-binding site is contributed by tyrosine 18. Histidine 23 functions as the Proton acceptor in the catalytic mechanism. Phenylalanine 69, asparagine 71, and asparagine 117 together coordinate tRNA.

Belongs to the PTH family. As to quaternary structure, monomer.

Its subcellular location is the cytoplasm. The catalysed reaction is an N-acyl-L-alpha-aminoacyl-tRNA + H2O = an N-acyl-L-amino acid + a tRNA + H(+). Functionally, hydrolyzes ribosome-free peptidyl-tRNAs (with 1 or more amino acids incorporated), which drop off the ribosome during protein synthesis, or as a result of ribosome stalling. In terms of biological role, catalyzes the release of premature peptidyl moieties from peptidyl-tRNA molecules trapped in stalled 50S ribosomal subunits, and thus maintains levels of free tRNAs and 50S ribosomes. In Hahella chejuensis (strain KCTC 2396), this protein is Peptidyl-tRNA hydrolase.